Reading from the N-terminus, the 227-residue chain is Rho-related GTP-binding protein RhoN (227 aa).

14 to 21 (GDAECGKT) contacts GTP. An Effector region motif is present at residues 36-44 (YVPTVFENY). GTP-binding positions include 61–65 (DTSGS) and 119–122 (CKLD). The segment at 186–227 (HRQLRRTDSRRGLQRSTQLSGRPDRGNEGEMHKDRAKSCNLM) is disordered. The span at 207-227 (RPDRGNEGEMHKDRAKSCNLM) shows a compositional bias: basic and acidic residues. Cys224 is subject to Cysteine methyl ester. Cys224 is lipidated: S-geranylgeranyl cysteine. Residues 225 to 227 (NLM) constitute a propeptide, removed in mature form.

It belongs to the small GTPase superfamily. Rho family. Interacts with the Rho-GAP domain of RACGAP1. Interacts with UBXD5. Interacts with PRAG1. In terms of tissue distribution, expressed specifically in neurons in the brain and spinal cord and also in hepatic stellate cells.

The protein localises to the cytoplasmic vesicle. The protein resides in the secretory vesicle. It localises to the acrosome membrane. May be specifically involved in neuronal and hepatic functions. Is a C3 toxin-insensitive member of the Rho subfamily. This chain is Rho-related GTP-binding protein RhoN (Rnd2), found in Mus musculus (Mouse).